Consider the following 557-residue polypeptide: High-affinity hexose transporter ght4 (557 aa).

The Cytoplasmic portion of the chain corresponds to 1–9 (MGRTLTSVL). A helical membrane pass occupies residues 10–30 (VVFISMAGWLGGADTGSISGI). Residues 31-58 (LGMRDFQSRFADRYNPITNSYSYSAWRQ) are Extracellular-facing. The chain crosses the membrane as a helical span at residues 59–79 (ALLTGTVNAGCLFGAMLSSPF). Residues 80–87 (TEAIGKKY) are Cytoplasmic-facing. The chain crosses the membrane as a helical span at residues 88–108 (SIAFFSGCYIIGQILLVTAVP). Topologically, residues 109-112 (SWVQ) are extracellular. Residues 113–133 (IMVGKLFTGLTIGALSVLSPG) form a helical membrane-spanning segment. Residues 134–144 (YQSEVAPPQIR) lie on the Cytoplasmic side of the membrane. A helical transmembrane segment spans residues 145–165 (GAVVSTYQLFQTCGTLIAACI). Topologically, residues 166–179 (NMGTHKLRKTASWR) are extracellular. The helical transmembrane segment at 180-200 (TSFGINILWGIFLMVGVLFLP) threads the bilayer. Over 201-266 (ESPRYLIYKG…VFGKEVRYRT (66 aa)) the chain is Cytoplasmic. A helical membrane pass occupies residues 267–285 (VLGFLTMLLRELIGNNYYF). At 286 to 301 (YYATQVFKGTGMTDIF) the chain is on the extracellular side. The chain crosses the membrane as a helical span at residues 302–322 (LPAVILGAINFGTTFGALYTI). Over 323-328 (DNLGRR) the chain is Cytoplasmic. A helical membrane pass occupies residues 329–349 (NPLIFGAAFQSICFFIYAAVG). Topologically, residues 350–363 (DRKLIYKNGTSDHR) are extracellular. An N-linked (GlcNAc...) asparagine glycan is attached at Asn357. Residues 364–384 (AGAVMIVFSCLFLFSYCCSWG) traverse the membrane as a helical segment. The Cytoplasmic segment spans residues 385–404 (PMGWVIVGETFPIRYRSKCA). Residues 405–425 (AVATSGNWLGNFMVSFFTPFI) traverse the membrane as a helical segment. Topologically, residues 426 to 432 (SNSIGFK) are extracellular. Residues 433–453 (LGYIYACINMTSAFQIFLMAK) traverse the membrane as a helical segment. Topologically, residues 454–557 (ETKGLTLEEV…VSEESHPTWV (104 aa)) are cytoplasmic. Residues 492 to 514 (KEEEKREREKSKGYRGQEERFIE) are compositionally biased toward basic and acidic residues. Residues 492–557 (KEEEKREREK…VSEESHPTWV (66 aa)) form a disordered region. A compositionally biased stretch (low complexity) spans 524–536 (SSASSESFASAGA). Residues 547–557 (NVSEESHPTWV) are compositionally biased toward basic and acidic residues.

The protein belongs to the major facilitator superfamily. Sugar transporter (TC 2.A.1.1) family.

It localises to the membrane. The chain is High-affinity hexose transporter ght4 (ght4) from Schizosaccharomyces pombe (strain 972 / ATCC 24843) (Fission yeast).